The following is a 96-amino-acid chain: Aspartyl/glutamyl-tRNA(Asn/Gln) amidotransferase subunit C (96 aa).

The protein belongs to the GatC family. As to quaternary structure, heterotrimer of A, B and C subunits.

It carries out the reaction L-glutamyl-tRNA(Gln) + L-glutamine + ATP + H2O = L-glutaminyl-tRNA(Gln) + L-glutamate + ADP + phosphate + H(+). The catalysed reaction is L-aspartyl-tRNA(Asn) + L-glutamine + ATP + H2O = L-asparaginyl-tRNA(Asn) + L-glutamate + ADP + phosphate + 2 H(+). In terms of biological role, allows the formation of correctly charged Asn-tRNA(Asn) or Gln-tRNA(Gln) through the transamidation of misacylated Asp-tRNA(Asn) or Glu-tRNA(Gln) in organisms which lack either or both of asparaginyl-tRNA or glutaminyl-tRNA synthetases. The reaction takes place in the presence of glutamine and ATP through an activated phospho-Asp-tRNA(Asn) or phospho-Glu-tRNA(Gln). The chain is Aspartyl/glutamyl-tRNA(Asn/Gln) amidotransferase subunit C from Leptospira interrogans serogroup Icterohaemorrhagiae serovar copenhageni (strain Fiocruz L1-130).